The following is an 869-amino-acid chain: MSSSSTSIMDNLFQRSLEDLIKGFRLQLLGESNFISRAVEEIRREIKATDLSTKSTALHKLSYLAALHGVDMSWAAFHAVEVVSSSRFQHKRIGYQAITQSFNDQTSVMLLITNQVRKDLNSANEYEVSLALECLSRIGTHDLARDLTPEVFTLLGSSKSFVKKKAIGVVLRVFEKYHDAVKVCFKRLVENLETSDPQILSAVVGVFCELATKDPQSCLPLAPEFYKVLVDSRNNWVLIKVLKIFAKLALIEPRLGKKVAEPICEHMRRTVAKSLVFECVRTVVSSLSDNEAAVKLAVAKIREFLVEDDPNLKYLGLNALSIVAPKHLWAVLENKEVVVKAMSDEDPNVKLEALHLLMAMVNEDNVSEISRILMNYALKSDPLFCNEIIFSVLSACSRNAYEIIVDFDWYLSLLGEMARIPHCQRGEDIEHQLIDIGMRVRDARPQLVRVSWALLIDPALLGNLFLHPILSAAAWVSGEYVEFSKNPYETVEALLQPRTDLLPPSIKAIYIHSAFKVLVFCLGSYFSSQEPTSSSLAQESSSGSLLVNVFTHESILSLVNVIELGLGPLSGYHDVEVQERAKNVLGYISVIKQEIAEQLNLQDNETEASRVTAFMEDVFSEEFGPISATAQEKVCVPDGLELKENLGDLEEICGEHLKPVESDSVSYTDKISFSVSKLRIRDQQEATSSSSPPHEASSLLAEHRKRHGMYYLTSQKEDQDSNGTSSDYPLANELANEISQDSFNPKRKPNQSKPRPVVVKLDDGDESRITPQAKTNIQTANDDESLSRAIQSALLVKNKGKEKDRYEGNPNSGQQEKEESSRIENHQNSEKKKKKKKKKKGEGSSKHKSRRQNEVASASEQVIIPDFLL.

S2 carries the post-translational modification N-acetylserine. 7 HEAT repeats span residues 33 to 70 (NFISRAVEEIRREIKATDLSTKSTALHKLSYLAALHGV), 107 to 142 (SVMLLITNQVRKDLNSANEYEVSLALECLSRIGTHD), 143 to 179 (LARDLTPEVFTLLGSSKSFVKKKAIGVVLRVFEKYHD), 180 to 216 (AVKVCFKRLVENLETSDPQILSAVVGVFCELATKDPQ), 218 to 254 (CLPLAPEFYKVLVDSRNNWVLIKVLKIFAKLALIEPR), 292 to 329 (AAVKLAVAKIREFLVEDDPNLKYLGLNALSIVAPKHLW), and 330 to 366 (AVLENKEVVVKAMSDEDPNVKLEALHLLMAMVNEDNV). The disordered stretch occupies residues 738-869 (ISQDSFNPKR…EQVIIPDFLL (132 aa)). Residues 769–780 (ITPQAKTNIQTA) show a composition bias toward polar residues. Over residues 815-830 (QEKEESSRIENHQNSE) the composition is skewed to basic and acidic residues. The segment covering 831–850 (KKKKKKKKKKGEGSSKHKSR) has biased composition (basic residues).

It belongs to the adaptor complexes large subunit family. As to quaternary structure, adaptor protein complex 3 (AP-3) is a heterotetramer composed of two large adaptins (delta-type subunit and beta-type subunit), a medium adaptin (mu-type subunit) and a small adaptin (sigma-type subunit). Binds to EPSIN2.

The protein resides in the cytoplasm. The protein localises to the golgi apparatus membrane. In terms of biological role, part of the AP-3 complex, an adaptor-related complex which seems to be clathrin-associated. The complex is associated with the Golgi region as well as more peripheral structures. It facilitates the budding of vesicles from the Golgi membrane and may be directly involved in trafficking to the vacuole. It also function in maintaining the identity of lytic vacuoles and in regulating the transition between storage and lytic vacuoles. The protein is AP-3 complex subunit delta (DELTA-ADR) of Arabidopsis thaliana (Mouse-ear cress).